The following is a 376-amino-acid chain: Queuine tRNA-ribosyltransferase (376 aa).

Asp89 functions as the Proton acceptor in the catalytic mechanism. Residues 89-93 (DSGGF), Asp143, Gln194, and Gly221 each bind substrate. An RNA binding region spans residues 252–258 (GVGTPSN). Asp271 functions as the Nucleophile in the catalytic mechanism. The RNA binding; important for wobble base 34 recognition stretch occupies residues 276–280 (ARNGR). The Zn(2+) site is built by Cys309, Cys311, Cys314, and His340.

The protein belongs to the queuine tRNA-ribosyltransferase family. In terms of assembly, homodimer. Within each dimer, one monomer is responsible for RNA recognition and catalysis, while the other monomer binds to the replacement base PreQ1. It depends on Zn(2+) as a cofactor.

The enzyme catalyses 7-aminomethyl-7-carbaguanine + guanosine(34) in tRNA = 7-aminomethyl-7-carbaguanosine(34) in tRNA + guanine. It functions in the pathway tRNA modification; tRNA-queuosine biosynthesis. Its function is as follows. Catalyzes the base-exchange of a guanine (G) residue with the queuine precursor 7-aminomethyl-7-deazaguanine (PreQ1) at position 34 (anticodon wobble position) in tRNAs with GU(N) anticodons (tRNA-Asp, -Asn, -His and -Tyr). Catalysis occurs through a double-displacement mechanism. The nucleophile active site attacks the C1' of nucleotide 34 to detach the guanine base from the RNA, forming a covalent enzyme-RNA intermediate. The proton acceptor active site deprotonates the incoming PreQ1, allowing a nucleophilic attack on the C1' of the ribose to form the product. After dissociation, two additional enzymatic reactions on the tRNA convert PreQ1 to queuine (Q), resulting in the hypermodified nucleoside queuosine (7-(((4,5-cis-dihydroxy-2-cyclopenten-1-yl)amino)methyl)-7-deazaguanosine). The sequence is that of Queuine tRNA-ribosyltransferase from Clostridium acetobutylicum (strain ATCC 824 / DSM 792 / JCM 1419 / IAM 19013 / LMG 5710 / NBRC 13948 / NRRL B-527 / VKM B-1787 / 2291 / W).